The primary structure comprises 184 residues: Protein GrpE (184 aa).

Residues 1–26 show a composition bias toward polar residues; it reads MANEQNEQAQDIQNEQVEQSNEQTQA. A disordered region spans residues 1–34; the sequence is MANEQNEQAQDIQNEQVEQSNEQTQAEGVEQAND.

This sequence belongs to the GrpE family. As to quaternary structure, homodimer.

Its subcellular location is the cytoplasm. Functionally, participates actively in the response to hyperosmotic and heat shock by preventing the aggregation of stress-denatured proteins, in association with DnaK and GrpE. It is the nucleotide exchange factor for DnaK and may function as a thermosensor. Unfolded proteins bind initially to DnaJ; upon interaction with the DnaJ-bound protein, DnaK hydrolyzes its bound ATP, resulting in the formation of a stable complex. GrpE releases ADP from DnaK; ATP binding to DnaK triggers the release of the substrate protein, thus completing the reaction cycle. Several rounds of ATP-dependent interactions between DnaJ, DnaK and GrpE are required for fully efficient folding. The sequence is that of Protein GrpE from Acinetobacter baumannii (strain AB307-0294).